Here is a 308-residue protein sequence, read N- to C-terminus: Probable very-long-chain enoyl-CoA reductase art-1 (308 aa).

The 79-residue stretch at Val7–Gln85 folds into the Ubiquitin-like domain. 4 consecutive transmembrane segments (helical) span residues Phe112 to Phe132, Trp169 to Phe189, Val194 to Leu214, and Trp255 to Phe275.

This sequence belongs to the steroid 5-alpha reductase family.

Its subcellular location is the endoplasmic reticulum membrane. The enzyme catalyses a very-long-chain 2,3-saturated fatty acyl-CoA + NADP(+) = a very-long-chain (2E)-enoyl-CoA + NADPH + H(+). Its pathway is lipid metabolism; fatty acid biosynthesis. Catalyzes the last of the four reactions of the long-chain fatty acids elongation cycle. This endoplasmic reticulum-bound enzymatic process, allows the addition of 2 carbons to the chain of long- and very long-chain fatty acids/VLCFAs per cycle. This enzyme reduces the trans-2,3-enoyl-CoA fatty acid intermediate to an acyl-CoA that can be further elongated by entering a new cycle of elongation. Thereby, it participates in the production of VLCFAs of different chain lengths that are involved in multiple biological processes as precursors of membrane lipids and lipid mediators. This chain is Probable very-long-chain enoyl-CoA reductase art-1 (art-1), found in Caenorhabditis elegans.